Reading from the N-terminus, the 156-residue chain is ATP synthase subunit b (156 aa).

A helical transmembrane segment spans residues Leu7–Leu29.

It belongs to the ATPase B chain family. As to quaternary structure, F-type ATPases have 2 components, F(1) - the catalytic core - and F(0) - the membrane proton channel. F(1) has five subunits: alpha(3), beta(3), gamma(1), delta(1), epsilon(1). F(0) has three main subunits: a(1), b(2) and c(10-14). The alpha and beta chains form an alternating ring which encloses part of the gamma chain. F(1) is attached to F(0) by a central stalk formed by the gamma and epsilon chains, while a peripheral stalk is formed by the delta and b chains.

It is found in the cell inner membrane. In terms of biological role, f(1)F(0) ATP synthase produces ATP from ADP in the presence of a proton or sodium gradient. F-type ATPases consist of two structural domains, F(1) containing the extramembraneous catalytic core and F(0) containing the membrane proton channel, linked together by a central stalk and a peripheral stalk. During catalysis, ATP synthesis in the catalytic domain of F(1) is coupled via a rotary mechanism of the central stalk subunits to proton translocation. Functionally, component of the F(0) channel, it forms part of the peripheral stalk, linking F(1) to F(0). This is ATP synthase subunit b from Shewanella pealeana (strain ATCC 700345 / ANG-SQ1).